The following is a 385-amino-acid chain: tRNA (guanine-N(7)-)-methyltransferase non-catalytic subunit wuho (385 aa).

WD repeat units lie at residues 68 to 108 (KVEV…AKLL), 155 to 194 (GHLS…DIHS), and 198 to 236 (GHKE…ELLH).

Belongs to the WD repeat TRM82 family. In terms of assembly, forms a heterodimer with the catalytic subunit Mettl1. Interacts with mei-P26 and weakly interacts with bgcn; required for the function or formation of the mei-P26-bgcn-bam-sxl complex. Interacts with nanos; may be involved in mei-P26-dependent derepression of the BMP signaling pathway. Interacts with Myc; the interaction may be mediated by mei-P26 and may be involved in the regulation of ribosome biogenesis. In terms of tissue distribution, in testis, it is present at high level in hub cells, a niche for germline stem cells of testis. Ubiquitously expressed in all testicular cells throughout spermatogenesis. Ubiquitously expressed in all germline and somatic cells of the ovary.

The protein localises to the nucleus. It localises to the cytoplasm. Its pathway is tRNA modification; N(7)-methylguanine-tRNA biosynthesis. Its function is as follows. Required for the Mettl1-dependent formation of N(7)-methylguanine at position 46 (m7G46) in tRNA. In the Mettl1-wuho methyltransferase complex, it is required to stabilize and induce conformational changes of the catalytic subunit. Required for binding of nanos mRNA and repression of translation by the mei-P26-bgcn-bam-sxl complex. May cooperate with mei-P26 and nanos to derepress the BMP signaling pathway. May cooperate with mei-P26 to suppress expression of a subset of microRNAs. May cooperate with mei-P26 to regulate bam expression levels in germline cells during gametogenesis. Required to promote mitosis to meiosis transition during gametogenesis. May regulate germline cell division in part by regulating ribosome biogenesis. This Drosophila grimshawi (Hawaiian fruit fly) protein is tRNA (guanine-N(7)-)-methyltransferase non-catalytic subunit wuho.